The sequence spans 152 residues: MFKEFKEFALKGNVVDMAVGIILGVAFGAIVKSLVDDLLMPGIGILLGSADFSNLFLVIKEGATPGPFTTLADAQKAGAVTINYGLFINTIVNFIIVAFALFLVIRNINQLRRMTEKPPVEEAPTTKDCPYCLSAIPLKATRCPNCTSELKG.

3 consecutive transmembrane segments (helical) span residues 14–34, 39–59, and 85–105; these read VVDM…VKSL, LMPG…FLVI, and GLFI…FLVI.

Belongs to the MscL family. Homopentamer.

The protein localises to the cell inner membrane. In terms of biological role, channel that opens in response to stretch forces in the membrane lipid bilayer. May participate in the regulation of osmotic pressure changes within the cell. The protein is Large-conductance mechanosensitive channel of Syntrophus aciditrophicus (strain SB).